Reading from the N-terminus, the 639-residue chain is Chaperone protein DnaK (639 aa).

Threonine 198 carries the post-translational modification Phosphothreonine; by autocatalysis. Positions 605–624 (SQAQGGAETNAGKQANAAAD) are disordered.

This sequence belongs to the heat shock protein 70 family.

Functionally, acts as a chaperone. The protein is Chaperone protein DnaK of Shewanella putrefaciens (strain CN-32 / ATCC BAA-453).